The sequence spans 732 residues: Acylamino-acid-releasing enzyme (732 aa).

Residue Met1 is modified to N-acetylmethionine. Residues Ser185 and Ser187 each carry the phosphoserine modification. Residues Ser587, Asp675, and His707 each act as charge relay system in the active site.

It belongs to the peptidase S9C family. As to quaternary structure, homotetramer.

The protein localises to the cytoplasm. It catalyses the reaction Cleavage of an N-acetyl or N-formyl amino acid from the N-terminus of a polypeptide.. Homotetramerization is required for activity. Tetramerization results in the formation of a gated channel which is involved in substrate selection and substrate access to the catalytic sites. Functionally, this enzyme catalyzes the hydrolysis of the N-terminal peptide bond of an N-acetylated peptide to generate an N-acetylated amino acid and a peptide with a free N-terminus. It preferentially cleaves off Ac-Ala, Ac-Met and Ac-Ser. Also, involved in the degradation of oxidized and glycated proteins. The sequence is that of Acylamino-acid-releasing enzyme (Apeh) from Mus musculus (Mouse).